The chain runs to 498 residues: Lysine--tRNA ligase (498 aa).

E408 and E415 together coordinate Mg(2+).

The protein belongs to the class-II aminoacyl-tRNA synthetase family. As to quaternary structure, homodimer. Mg(2+) is required as a cofactor.

It localises to the cytoplasm. The enzyme catalyses tRNA(Lys) + L-lysine + ATP = L-lysyl-tRNA(Lys) + AMP + diphosphate. The polypeptide is Lysine--tRNA ligase (Listeria monocytogenes serovar 1/2a (strain ATCC BAA-679 / EGD-e)).